The chain runs to 450 residues: uncharacterized protein (450 aa).

Residues 141-151 (WLDKTDGEKNS) show a composition bias toward basic and acidic residues. Disordered regions lie at residues 141–171 (WLDK…DSAG), 276–298 (LQDS…AVSQ), and 395–416 (DDED…LSRN). The span at 152 to 171 (EASSTDNSLENSTKGADSAG) shows a compositional bias: polar residues. The segment covering 283–298 (QGDKGEKESKDDAVSQ) has biased composition (basic and acidic residues). The segment covering 395-411 (DDEDEDNVDNSEGDEES) has biased composition (acidic residues).

This is an uncharacterized protein from Saccharomyces cerevisiae (strain ATCC 204508 / S288c) (Baker's yeast).